Consider the following 179-residue polypeptide: Large ribosomal subunit protein uL10 (179 aa).

It belongs to the universal ribosomal protein uL10 family. Part of the ribosomal stalk of the 50S ribosomal subunit. The N-terminus interacts with L11 and the large rRNA to form the base of the stalk. The C-terminus forms an elongated spine to which L12 dimers bind in a sequential fashion forming a multimeric L10(L12)X complex.

Forms part of the ribosomal stalk, playing a central role in the interaction of the ribosome with GTP-bound translation factors. This is Large ribosomal subunit protein uL10 from Mycolicibacterium vanbaalenii (strain DSM 7251 / JCM 13017 / BCRC 16820 / KCTC 9966 / NRRL B-24157 / PYR-1) (Mycobacterium vanbaalenii).